Here is a 161-residue protein sequence, read N- to C-terminus: Trivalent organoarsenical cleaving enzyme (161 aa).

Residues 2-119 form the VOC domain; it reads KYAHVGLNVT…DGNEWEFFYT (118 aa). Residues histidine 5 and histidine 62 each contribute to the Fe(2+) site. The roxarsone (III) site is built by cysteine 96 and cysteine 97. Glutamate 115 provides a ligand contact to Fe(2+).

Fe(2+) is required as a cofactor.

The catalysed reaction is methylarsonous acid + AH2 + O2 = arsenite + methanol + A + H(+). It carries out the reaction roxarsone (III) + AH2 + O2 = 4-hydroxy-3-nitrocyclohexa-2,5-dien-1-one + arsenite + A + H(+). It catalyses the reaction nitarsone (III) + AH2 + O2 = 4-nitrocyclohexa-2,5-dien-1-one + arsenite + A + H(+). The enzyme catalyses 4-aminophenylarsonous acid + AH2 + O2 = 4-aminocyclohexa-2,5-dien-1-one + arsenite + A. Inhibited in vitro by reagents that chemically modify histidine residues (diethylpyrocarbonate (DEPC)), aspartate or glutamate residues (1-ethyl-3-(3-(dimethylamino)propyl) carbodiimide (EDC)), or cysteine residues (N-ethylmaleimide (NEM) or iodoacetamide (IAA)). Functionally, nonheme iron-dependent dioxygenase that can break carbon-arsenic bonds, playing a role in the detoxification of environmental organoarsenical compounds. Catalyzes the oxygen-dependent demethylation of highly toxic methylarsonous acid (MAs(III)) to arsenite, which can then be exported out of the cell. Can also cleave the C-As bond in several trivalent aromatic arsenicals, including roxarsone (III), nitarsone (III) and (4-aminophenyl)arsonous acid. Organoarsenical degradation by this enzyme is proposed to have a significant impact on the arsenic biogeocycle that maintains a balance between organic and inorganic species. This Bacillus sp. (strain MD1) protein is Trivalent organoarsenical cleaving enzyme.